A 226-amino-acid chain; its full sequence is Orotate phosphoribosyltransferase (226 aa).

5-phospho-alpha-D-ribose 1-diphosphate is bound by residues R107, K108, K111, and 133–141 (EDLTTDGGS). T137 contributes to the orotate binding site.

It belongs to the purine/pyrimidine phosphoribosyltransferase family. PyrE subfamily. In terms of assembly, homodimer. Mg(2+) is required as a cofactor.

The enzyme catalyses orotidine 5'-phosphate + diphosphate = orotate + 5-phospho-alpha-D-ribose 1-diphosphate. It participates in pyrimidine metabolism; UMP biosynthesis via de novo pathway; UMP from orotate: step 1/2. In terms of biological role, catalyzes the transfer of a ribosyl phosphate group from 5-phosphoribose 1-diphosphate to orotate, leading to the formation of orotidine monophosphate (OMP). This Dinoroseobacter shibae (strain DSM 16493 / NCIMB 14021 / DFL 12) protein is Orotate phosphoribosyltransferase.